Consider the following 292-residue polypeptide: ATP synthase gamma chain (292 aa).

Belongs to the ATPase gamma chain family. As to quaternary structure, F-type ATPases have 2 components, CF(1) - the catalytic core - and CF(0) - the membrane proton channel. CF(1) has five subunits: alpha(3), beta(3), gamma(1), delta(1), epsilon(1). CF(0) has three main subunits: a, b and c.

It localises to the cell inner membrane. Its function is as follows. Produces ATP from ADP in the presence of a proton gradient across the membrane. The gamma chain is believed to be important in regulating ATPase activity and the flow of protons through the CF(0) complex. This chain is ATP synthase gamma chain, found in Brucella canis (strain ATCC 23365 / NCTC 10854 / RM-666).